Consider the following 350-residue polypeptide: Kelch domain-containing protein 9 (350 aa).

Kelch repeat units follow at residues 39–89 (RFYL…LVGG), 91–137 (WLCV…SHTC), and 325–350 (QLYL…EFFI).

Interacts with CCNA1.

The protein is Kelch domain-containing protein 9 (Klhdc9) of Mus musculus (Mouse).